Reading from the N-terminus, the 304-residue chain is Porphobilinogen deaminase (304 aa).

C240 is subject to S-(dipyrrolylmethanemethyl)cysteine.

This sequence belongs to the HMBS family. In terms of assembly, monomer. The cofactor is dipyrromethane.

The enzyme catalyses 4 porphobilinogen + H2O = hydroxymethylbilane + 4 NH4(+). Its pathway is porphyrin-containing compound metabolism; protoporphyrin-IX biosynthesis; coproporphyrinogen-III from 5-aminolevulinate: step 2/4. Its function is as follows. Tetrapolymerization of the monopyrrole PBG into the hydroxymethylbilane pre-uroporphyrinogen in several discrete steps. This Xanthomonas euvesicatoria pv. vesicatoria (strain 85-10) (Xanthomonas campestris pv. vesicatoria) protein is Porphobilinogen deaminase.